The following is a 476-amino-acid chain: 3-isopropylmalate dehydratase large subunit (476 aa).

Residues C353, C413, and C416 each contribute to the [4Fe-4S] cluster site.

The protein belongs to the aconitase/IPM isomerase family. LeuC type 1 subfamily. Heterodimer of LeuC and LeuD. The cofactor is [4Fe-4S] cluster.

It catalyses the reaction (2R,3S)-3-isopropylmalate = (2S)-2-isopropylmalate. It participates in amino-acid biosynthesis; L-leucine biosynthesis; L-leucine from 3-methyl-2-oxobutanoate: step 2/4. Its function is as follows. Catalyzes the isomerization between 2-isopropylmalate and 3-isopropylmalate, via the formation of 2-isopropylmaleate. The protein is 3-isopropylmalate dehydratase large subunit of Yersinia pseudotuberculosis serotype O:1b (strain IP 31758).